Here is a 207-residue protein sequence, read N- to C-terminus: Small ribosomal subunit protein uS4 (207 aa).

Residues 31-55 form a disordered region; that stretch reads KCKLDSKPGQHGRTSGARTSDYGTQ. The segment covering 42-53 has biased composition (polar residues); it reads GRTSGARTSDYG. Residues 97–160 enclose the S4 RNA-binding domain; that stretch reads SRLDNVVYRM…KKQARIVEAL (64 aa).

Belongs to the universal ribosomal protein uS4 family. In terms of assembly, part of the 30S ribosomal subunit. Contacts protein S5. The interaction surface between S4 and S5 is involved in control of translational fidelity.

Its function is as follows. One of the primary rRNA binding proteins, it binds directly to 16S rRNA where it nucleates assembly of the body of the 30S subunit. In terms of biological role, with S5 and S12 plays an important role in translational accuracy. The chain is Small ribosomal subunit protein uS4 from Burkholderia lata (strain ATCC 17760 / DSM 23089 / LMG 22485 / NCIMB 9086 / R18194 / 383).